Reading from the N-terminus, the 916-residue chain is Translation initiation factor IF-2 (916 aa).

Residues 151 to 191 (NLDEQQRLAESDRARDEAIQRKRDEEQAAKDRVEAERKAAE) show a composition bias toward basic and acidic residues. Disordered stretches follow at residues 151 to 262 (NLDE…SHVM) and 280 to 328 (HLSA…ERPT). 2 stretches are compositionally biased toward low complexity: residues 192–243 (EAAA…ATPA) and 293–305 (RGKPTGRPGSSSS). The tr-type G domain occupies 415 to 584 (SRPPVVTIMG…SLQAEVLELK (170 aa)). The segment at 424–431 (GHVDHGKT) is G1. 424-431 (GHVDHGKT) contributes to the GTP binding site. Positions 449-453 (GITQH) are G2. The segment at 470–473 (DTPG) is G3. Residues 470 to 474 (DTPGH) and 524 to 527 (NKID) contribute to the GTP site. The tract at residues 524–527 (NKID) is G4. The segment at 560 to 562 (SAK) is G5.

The protein belongs to the TRAFAC class translation factor GTPase superfamily. Classic translation factor GTPase family. IF-2 subfamily.

It localises to the cytoplasm. Its function is as follows. One of the essential components for the initiation of protein synthesis. Protects formylmethionyl-tRNA from spontaneous hydrolysis and promotes its binding to the 30S ribosomal subunits. Also involved in the hydrolysis of GTP during the formation of the 70S ribosomal complex. The protein is Translation initiation factor IF-2 of Xanthomonas campestris pv. campestris (strain B100).